Consider the following 399-residue polypeptide: Phosphoglycerate kinase (399 aa).

Substrate contacts are provided by residues 22–24, R37, 60–63, R119, and R152; these read DLN and HFGR. Residues K202, E324, and 354 to 357 each bind ATP; that span reads GGDT.

The protein belongs to the phosphoglycerate kinase family. As to quaternary structure, monomer.

It localises to the cytoplasm. The enzyme catalyses (2R)-3-phosphoglycerate + ATP = (2R)-3-phospho-glyceroyl phosphate + ADP. It participates in carbohydrate degradation; glycolysis; pyruvate from D-glyceraldehyde 3-phosphate: step 2/5. The sequence is that of Phosphoglycerate kinase from Sinorhizobium fredii (strain NBRC 101917 / NGR234).